Here is a 200-residue protein sequence, read N- to C-terminus: 3-isopropylmalate dehydratase small subunit (200 aa).

The protein belongs to the LeuD family. LeuD type 1 subfamily. As to quaternary structure, heterodimer of LeuC and LeuD.

It carries out the reaction (2R,3S)-3-isopropylmalate = (2S)-2-isopropylmalate. It functions in the pathway amino-acid biosynthesis; L-leucine biosynthesis; L-leucine from 3-methyl-2-oxobutanoate: step 2/4. Functionally, catalyzes the isomerization between 2-isopropylmalate and 3-isopropylmalate, via the formation of 2-isopropylmaleate. The chain is 3-isopropylmalate dehydratase small subunit from Yersinia pseudotuberculosis serotype I (strain IP32953).